The following is a 494-amino-acid chain: Rho GTPase-activating protein 19 (494 aa).

Alanine 2 bears the N-acetylalanine mark. Phosphoserine occurs at positions 7 and 31. The 207-residue stretch at 102-308 (MSLKRKEKGV…FMIKHSQKLF (207 aa)) folds into the Rho-GAP domain. The disordered stretch occupies residues 399 to 451 (QSLTQTPGREPSTPRVQKRARSRSFSGLIKRKVLGSQMTSEKKNSSPAPESVA). 3 positions are modified to phosphoserine: serine 422, serine 438, and serine 470. Threonine 478 carries the phosphothreonine modification.

GTPase activator for the Rho-type GTPases by converting them to an inactive GDP-bound state. The chain is Rho GTPase-activating protein 19 (Arhgap19) from Mus musculus (Mouse).